The sequence spans 606 residues: Elongation factor 4 (606 aa).

The 183-residue stretch at 10–192 (IRKKNFCIIA…AICKYVPSPR (183 aa)) folds into the tr-type G domain. Residues 22 to 27 (DHGKST) and 139 to 142 (NKID) each bind GTP.

This sequence belongs to the TRAFAC class translation factor GTPase superfamily. Classic translation factor GTPase family. LepA subfamily.

Its subcellular location is the cell inner membrane. The catalysed reaction is GTP + H2O = GDP + phosphate + H(+). Required for accurate and efficient protein synthesis under certain stress conditions. May act as a fidelity factor of the translation reaction, by catalyzing a one-codon backward translocation of tRNAs on improperly translocated ribosomes. Back-translocation proceeds from a post-translocation (POST) complex to a pre-translocation (PRE) complex, thus giving elongation factor G a second chance to translocate the tRNAs correctly. Binds to ribosomes in a GTP-dependent manner. This is Elongation factor 4 from Borreliella burgdorferi (strain ATCC 35210 / DSM 4680 / CIP 102532 / B31) (Borrelia burgdorferi).